The primary structure comprises 932 residues: Isoleucine--tRNA ligase (932 aa).

Positions 58–68 (PYANGNLHLGH) match the 'HIGH' region motif. An L-isoleucyl-5'-AMP-binding site is contributed by glutamate 567. Positions 608–612 (KMSKS) match the 'KMSKS' region motif. Position 611 (lysine 611) interacts with ATP. The Zn(2+) site is built by cysteine 895, cysteine 898, cysteine 915, and cysteine 918.

This sequence belongs to the class-I aminoacyl-tRNA synthetase family. IleS type 1 subfamily. As to quaternary structure, monomer. Zn(2+) is required as a cofactor.

The protein localises to the cytoplasm. The enzyme catalyses tRNA(Ile) + L-isoleucine + ATP = L-isoleucyl-tRNA(Ile) + AMP + diphosphate. In terms of biological role, catalyzes the attachment of isoleucine to tRNA(Ile). As IleRS can inadvertently accommodate and process structurally similar amino acids such as valine, to avoid such errors it has two additional distinct tRNA(Ile)-dependent editing activities. One activity is designated as 'pretransfer' editing and involves the hydrolysis of activated Val-AMP. The other activity is designated 'posttransfer' editing and involves deacylation of mischarged Val-tRNA(Ile). In Azoarcus sp. (strain BH72), this protein is Isoleucine--tRNA ligase.